Here is a 373-residue protein sequence, read N- to C-terminus: Cobalt-precorrin-5B C(1)-methyltransferase (373 aa).

It belongs to the CbiD family.

The enzyme catalyses Co-precorrin-5B + S-adenosyl-L-methionine = Co-precorrin-6A + S-adenosyl-L-homocysteine. Its pathway is cofactor biosynthesis; adenosylcobalamin biosynthesis; cob(II)yrinate a,c-diamide from sirohydrochlorin (anaerobic route): step 6/10. In terms of biological role, catalyzes the methylation of C-1 in cobalt-precorrin-5B to form cobalt-precorrin-6A. This is Cobalt-precorrin-5B C(1)-methyltransferase from Listeria monocytogenes serotype 4a (strain HCC23).